A 462-amino-acid polypeptide reads, in one-letter code: Glycine--tRNA ligase (462 aa).

Residues Arg-101 and Glu-164 each coordinate substrate. ATP contacts are provided by residues 196–198 (RNE), 206–211 (FRTREF), 283–284 (EL), and 327–330 (GVDR). A substrate-binding site is contributed by 211–215 (FEQME). A substrate-binding site is contributed by 323–327 (EPSAG).

The protein belongs to the class-II aminoacyl-tRNA synthetase family. In terms of assembly, homodimer.

The protein resides in the cytoplasm. The enzyme catalyses tRNA(Gly) + glycine + ATP = glycyl-tRNA(Gly) + AMP + diphosphate. In terms of biological role, catalyzes the attachment of glycine to tRNA(Gly). The chain is Glycine--tRNA ligase from Thermobifida fusca (strain YX).